The chain runs to 328 residues: Carbonic anhydrase-related protein 11 (328 aa).

An N-terminal signal peptide occupies residues 1–22 (MGAAARLSAPRALVLWAALGAA). An Alpha-carbonic anhydrase domain is found at 33-303 (DWWSYKDNLQ…LAHRALRGNR (271 aa)). Residues Asn-118, Asn-170, and Asn-260 are each glycosylated (N-linked (GlcNAc...) asparagine). Residues 300–328 (RGNRDPRHPERRCRGPNYRLHVDGAPHGR) form a disordered region. Basic and acidic residues predominate over residues 319–328 (LHVDGAPHGR).

This sequence belongs to the alpha-carbonic anhydrase family.

It is found in the secreted. Its function is as follows. Does not have a catalytic activity. The polypeptide is Carbonic anhydrase-related protein 11 (CA11) (Bos taurus (Bovine)).